Consider the following 295-residue polypeptide: tRNA pseudouridine synthase B (295 aa).

Aspartate 42 functions as the Nucleophile in the catalytic mechanism.

The protein belongs to the pseudouridine synthase TruB family. Type 1 subfamily.

It carries out the reaction uridine(55) in tRNA = pseudouridine(55) in tRNA. Functionally, responsible for synthesis of pseudouridine from uracil-55 in the psi GC loop of transfer RNAs. The polypeptide is tRNA pseudouridine synthase B (Cutibacterium acnes (strain DSM 16379 / KPA171202) (Propionibacterium acnes)).